A 348-amino-acid polypeptide reads, in one-letter code: MKIIQEIPEKNIIKVMPENLDDLWHLSHIVQAYNAVYSVTERRTEDKGDKLRADRGTKRRVFLGIKVEKVSFHEEVNRLRVSGKIIHAPEDIPIGSYHTLDIEPFTQISIQKNWKKWDLTRLKEAEESGKRPKVVVVILDDSEADIFTVRDFGVKELASIKSGVSKRIDSKQNEQAKYLYYNEIITTLSEFDGKILFAGPGFSKNNIQNYISEKHKDLASKIVIESTNHTGRLGLSEILKSGIIDRIYGEARLSKESQIIEKLLEEISKKRLASYGLNSVKNSINYSAVETLLITDEFLRRNRSTVEEMVNSVENSGGKFVVISTEHDSGRQLKALGGISALLRFPVE.

This sequence belongs to the eukaryotic release factor 1 family. Pelota subfamily. In terms of assembly, monomer. Requires a divalent metal cation as cofactor.

The protein resides in the cytoplasm. May function in recognizing stalled ribosomes, interact with stem-loop structures in stalled mRNA molecules, and effect endonucleolytic cleavage of the mRNA. May play a role in the release non-functional ribosomes and degradation of damaged mRNAs. Has endoribonuclease activity. The protein is Protein pelota homolog of Methanococcus vannielii (strain ATCC 35089 / DSM 1224 / JCM 13029 / OCM 148 / SB).